The sequence spans 62 residues: Large ribosomal subunit protein bL33 (62 aa).

It belongs to the bacterial ribosomal protein bL33 family.

The polypeptide is Large ribosomal subunit protein bL33 (Acaryochloris marina (strain MBIC 11017)).